Here is a 459-residue protein sequence, read N- to C-terminus: Cysteine--tRNA ligase (459 aa).

Position 28 (Cys-28) interacts with Zn(2+). Residues Val-30–His-40 carry the 'HIGH' region motif. Residues Cys-209, His-234, and Glu-238 each contribute to the Zn(2+) site. A 'KMSKS' region motif is present at residues Lys-266–Ser-270. An ATP-binding site is contributed by Lys-269.

Belongs to the class-I aminoacyl-tRNA synthetase family. In terms of assembly, monomer. Requires Zn(2+) as cofactor.

The protein localises to the cytoplasm. The catalysed reaction is tRNA(Cys) + L-cysteine + ATP = L-cysteinyl-tRNA(Cys) + AMP + diphosphate. This is Cysteine--tRNA ligase from Haemophilus influenzae (strain PittGG).